The chain runs to 273 residues: 4-hydroxy-tetrahydrodipicolinate reductase (273 aa).

NAD(+) contacts are provided by residues 12–17 (GAGGRM) and Glu38. Arg39 serves as a coordination point for NADP(+). NAD(+) is bound by residues 102-104 (GTT) and 126-129 (AANF). His159 acts as the Proton donor/acceptor in catalysis. His160 is a binding site for (S)-2,3,4,5-tetrahydrodipicolinate. Lys163 acts as the Proton donor in catalysis. 169–170 (GT) provides a ligand contact to (S)-2,3,4,5-tetrahydrodipicolinate.

Belongs to the DapB family. As to quaternary structure, homotetramer.

Its subcellular location is the cytoplasm. It catalyses the reaction (S)-2,3,4,5-tetrahydrodipicolinate + NAD(+) + H2O = (2S,4S)-4-hydroxy-2,3,4,5-tetrahydrodipicolinate + NADH + H(+). The enzyme catalyses (S)-2,3,4,5-tetrahydrodipicolinate + NADP(+) + H2O = (2S,4S)-4-hydroxy-2,3,4,5-tetrahydrodipicolinate + NADPH + H(+). The protein operates within amino-acid biosynthesis; L-lysine biosynthesis via DAP pathway; (S)-tetrahydrodipicolinate from L-aspartate: step 4/4. Catalyzes the conversion of 4-hydroxy-tetrahydrodipicolinate (HTPA) to tetrahydrodipicolinate. This is 4-hydroxy-tetrahydrodipicolinate reductase from Salmonella gallinarum (strain 287/91 / NCTC 13346).